The chain runs to 279 residues: uncharacterized protein (279 aa).

3 helical membrane passes run 1 to 21, 38 to 58, and 131 to 151; these read MGFIKSTLLATVTVFVGLCGI, FACHTFLAISSAYGVIASVVA, and SLRYVPILGWFMILSDVVFID.

Belongs to the 1-acyl-sn-glycerol-3-phosphate acyltransferase family.

The protein resides in the endoplasmic reticulum membrane. This is an uncharacterized protein from Schizosaccharomyces pombe (strain 972 / ATCC 24843) (Fission yeast).